Here is a 305-residue protein sequence, read N- to C-terminus: Tyrosine recombinase XerD (305 aa).

Positions 9–94 (MQDFGYVEQF…AIRRLFQYLH (86 aa)) constitute a Core-binding (CB) domain. A Tyr recombinase domain is found at 115 to 299 (RLPKDISEEQ…ATERLKQIHS (185 aa)). Active-site residues include arginine 155, lysine 179, histidine 251, arginine 254, and histidine 277. Tyrosine 286 acts as the O-(3'-phospho-DNA)-tyrosine intermediate in catalysis.

It belongs to the 'phage' integrase family. XerD subfamily. In terms of assembly, forms a cyclic heterotetrameric complex composed of two molecules of XerC and two molecules of XerD.

The protein resides in the cytoplasm. In terms of biological role, site-specific tyrosine recombinase, which acts by catalyzing the cutting and rejoining of the recombining DNA molecules. The XerC-XerD complex is essential to convert dimers of the bacterial chromosome into monomers to permit their segregation at cell division. It also contributes to the segregational stability of plasmids. The sequence is that of Tyrosine recombinase XerD from Vibrio vulnificus (strain CMCP6).